We begin with the raw amino-acid sequence, 286 residues long: NAD kinase (286 aa).

The Proton acceptor role is filled by aspartate 66. Residues 66 to 67, 137 to 138, arginine 148, arginine 165, aspartate 167, and 178 to 183 contribute to the NAD(+) site; these read DG, ND, and TAYSMS.

Belongs to the NAD kinase family. A divalent metal cation serves as cofactor.

Its subcellular location is the cytoplasm. It carries out the reaction NAD(+) + ATP = ADP + NADP(+) + H(+). Functionally, involved in the regulation of the intracellular balance of NAD and NADP, and is a key enzyme in the biosynthesis of NADP. Catalyzes specifically the phosphorylation on 2'-hydroxyl of the adenosine moiety of NAD to yield NADP. The chain is NAD kinase from Chlorobium chlorochromatii (strain CaD3).